We begin with the raw amino-acid sequence, 285 residues long: tRNA pseudouridine synthase A (285 aa).

Catalysis depends on D69, which acts as the Nucleophile. Y127 is a substrate binding site.

Belongs to the tRNA pseudouridine synthase TruA family. In terms of assembly, homodimer.

It catalyses the reaction uridine(38/39/40) in tRNA = pseudouridine(38/39/40) in tRNA. Functionally, formation of pseudouridine at positions 38, 39 and 40 in the anticodon stem and loop of transfer RNAs. The polypeptide is tRNA pseudouridine synthase A (Pseudomonas aeruginosa (strain ATCC 15692 / DSM 22644 / CIP 104116 / JCM 14847 / LMG 12228 / 1C / PRS 101 / PAO1)).